The following is a 377-amino-acid chain: Guanine nucleotide-binding protein subunit beta-1 (377 aa).

WD repeat units lie at residues 63–93 (GHTG…IVWN), 105–135 (LPCA…SIFN), 154–185 (GHKG…VLWD), 202–233 (GHTA…RLWD), 246–276 (GHEG…RLFD), 293–323 (GDIP…YVWD), and 339–369 (SHEG…KIWA).

It belongs to the WD repeat G protein beta family. G proteins are composed of 3 units, alpha, beta and gamma.

Its function is as follows. Guanine nucleotide-binding proteins (G proteins) are involved as a modulator or transducer in various transmembrane signaling systems. The beta and gamma chains are required for the GTPase activity, for replacement of GDP by GTP, and for G protein-effector interaction. The polypeptide is Guanine nucleotide-binding protein subunit beta-1 (Nicotiana tabacum (Common tobacco)).